Reading from the N-terminus, the 76-residue chain is Conotoxin ArMLCL-022 (76 aa).

An N-terminal signal peptide occupies residues 1-19 (MLCLPVFIILLLLASTAAS). The propeptide occupies 20 to 52 (NPLETRIQSDLIRAALEDADMKTERGFLGVLMK).

It belongs to the conotoxin T superfamily. As to expression, expressed by the venom duct.

The protein localises to the secreted. This Conus arenatus (Sand-dusted cone) protein is Conotoxin ArMLCL-022.